The following is a 632-amino-acid chain: tRNA uridine 5-carboxymethylaminomethyl modification enzyme MnmG (632 aa).

FAD is bound by residues 13–18 (GGGHAG), Val125, and Ser180. 273 to 287 (GPRYCPSIEDKVVRF) is an NAD(+) binding site. FAD is bound at residue Gln370.

Belongs to the MnmG family. As to quaternary structure, homodimer. Heterotetramer of two MnmE and two MnmG subunits. Requires FAD as cofactor.

The protein localises to the cytoplasm. In terms of biological role, NAD-binding protein involved in the addition of a carboxymethylaminomethyl (cmnm) group at the wobble position (U34) of certain tRNAs, forming tRNA-cmnm(5)s(2)U34. This chain is tRNA uridine 5-carboxymethylaminomethyl modification enzyme MnmG, found in Nitrosospira multiformis (strain ATCC 25196 / NCIMB 11849 / C 71).